We begin with the raw amino-acid sequence, 209 residues long: Orotate phosphoribosyltransferase (209 aa).

5-phospho-alpha-D-ribose 1-diphosphate contacts are provided by residues R96, K100, H102, and 122-130 (EDLISTGGS). S126 provides a ligand contact to orotate.

This sequence belongs to the purine/pyrimidine phosphoribosyltransferase family. PyrE subfamily. As to quaternary structure, homodimer. Mg(2+) serves as cofactor.

The enzyme catalyses orotidine 5'-phosphate + diphosphate = orotate + 5-phospho-alpha-D-ribose 1-diphosphate. Its pathway is pyrimidine metabolism; UMP biosynthesis via de novo pathway; UMP from orotate: step 1/2. Its function is as follows. Catalyzes the transfer of a ribosyl phosphate group from 5-phosphoribose 1-diphosphate to orotate, leading to the formation of orotidine monophosphate (OMP). The protein is Orotate phosphoribosyltransferase of Streptococcus agalactiae serotype III (strain NEM316).